An 82-amino-acid chain; its full sequence is Large ribosomal subunit protein bL31B (82 aa).

Belongs to the bacterial ribosomal protein bL31 family. Type B subfamily. As to quaternary structure, part of the 50S ribosomal subunit.

The chain is Large ribosomal subunit protein bL31B from Bacillus velezensis (strain DSM 23117 / BGSC 10A6 / LMG 26770 / FZB42) (Bacillus amyloliquefaciens subsp. plantarum).